The chain runs to 337 residues: Phenylpyruvate C(3)-methyltransferase (337 aa).

This sequence belongs to the methyltransferase superfamily.

The enzyme catalyses 3-phenylpyruvate + S-adenosyl-L-methionine = (3S)-2-oxo-3-phenylbutanoate + S-adenosyl-L-homocysteine + H(+). The protein operates within antibiotic biosynthesis. Its function is as follows. S-adenosyl-L-methionine-dependent methyltransferase involved in synthesis of the nonproteinogenic amino acid (2S,3S)-beta-methyl-phenylalanine, a building block of the antibiotic mannopeptimycin. The sequence is that of Phenylpyruvate C(3)-methyltransferase (mppJ) from Streptomyces hygroscopicus.